Here is a 71-residue protein sequence, read N- to C-terminus: Small ribosomal subunit protein bS21 (71 aa).

The segment at glutamate 39–tyrosine 71 is disordered. Residues threonine 43–lysine 59 are compositionally biased toward basic residues. Over residues leucine 60–tyrosine 71 the composition is skewed to basic and acidic residues.

Belongs to the bacterial ribosomal protein bS21 family.

The polypeptide is Small ribosomal subunit protein bS21 (Vibrio atlanticus (strain LGP32) (Vibrio splendidus (strain Mel32))).